We begin with the raw amino-acid sequence, 92 residues long: Small ribosomal subunit protein uS19 (92 aa).

This sequence belongs to the universal ribosomal protein uS19 family.

Functionally, protein S19 forms a complex with S13 that binds strongly to the 16S ribosomal RNA. The polypeptide is Small ribosomal subunit protein uS19 (Geobacillus sp. (strain WCH70)).